A 246-amino-acid chain; its full sequence is Apolipoprotein L domain-containing protein 1 (246 aa).

A run of 2 helical transmembrane segments spans residues 50–72 (SLAA…IVGL) and 89–109 (GLGV…SLIF). The stretch at 193–220 (LKAKIQKLSESLESCTGALDELSEQLES) forms a coiled coil.

This sequence belongs to the apolipoprotein L family. Present at low levels in brain vascular cells (at protein level).

Its subcellular location is the cell membrane. It localises to the cell junction. The protein resides in the cytoplasmic vesicle. The protein localises to the secretory vesicle. In terms of biological role, is a modulator of endothelial barrier permeability, required for proper organization of endothelial cell-cell junctions and cytoskeleton. It also plays a role in the modulation of secretory autophagy. May affect blood-brain barrier permeability. The chain is Apolipoprotein L domain-containing protein 1 (Apold1) from Rattus norvegicus (Rat).